A 310-amino-acid polypeptide reads, in one-letter code: ADP-L-glycero-D-manno-heptose-6-epimerase (310 aa).

NADP(+)-binding positions include 10 to 11 (FI), 31 to 32 (DN), Lys-38, Lys-53, 75 to 79 (EGACS), and Asn-92. Tyr-140 functions as the Proton acceptor in the catalytic mechanism. NADP(+) is bound at residue Lys-144. A substrate-binding site is contributed by Asn-169. NADP(+)-binding residues include Val-170 and Lys-178. The Proton acceptor role is filled by Lys-178. Residues Ser-180, His-187, 201–204 (FAGS), Arg-209, and Tyr-272 contribute to the substrate site.

Belongs to the NAD(P)-dependent epimerase/dehydratase family. HldD subfamily. Homopentamer. It depends on NADP(+) as a cofactor.

It catalyses the reaction ADP-D-glycero-beta-D-manno-heptose = ADP-L-glycero-beta-D-manno-heptose. It participates in nucleotide-sugar biosynthesis; ADP-L-glycero-beta-D-manno-heptose biosynthesis; ADP-L-glycero-beta-D-manno-heptose from D-glycero-beta-D-manno-heptose 7-phosphate: step 4/4. Its function is as follows. Catalyzes the interconversion between ADP-D-glycero-beta-D-manno-heptose and ADP-L-glycero-beta-D-manno-heptose via an epimerization at carbon 6 of the heptose. The polypeptide is ADP-L-glycero-D-manno-heptose-6-epimerase (Yersinia pseudotuberculosis serotype O:1b (strain IP 31758)).